The primary structure comprises 541 residues: Testis-specific chromodomain protein Y 2 (541 aa).

The Chromo domain occupies 6-66 (FEVEAIVDKR…RQTEKQKKLT (61 aa)). The tract at residues 72-104 (RIFSNNARRRTSRSTKANYSKNSPKTPVTDKHH) is disordered. Positions 87-97 (KANYSKNSPKT) are enriched in polar residues.

Testis specific.

Its subcellular location is the nucleus. The catalysed reaction is L-lysyl-[protein] + acetyl-CoA = N(6)-acetyl-L-lysyl-[protein] + CoA + H(+). Functionally, may have histone acetyltransferase activity. This Homo sapiens (Human) protein is Testis-specific chromodomain protein Y 2 (CDY2A).